Consider the following 431-residue polypeptide: Cleavage stimulation factor subunit 1 (431 aa).

WD repeat units lie at residues 106–145 (SHKG…AKSA), 171–210 (DHVD…AKRA), 215–254 (QEAE…CFVS), 260–301 (QHTD…TTFE), 303–343 (AHDG…TLVR), and 395–431 (GHNN…STTD).

Homodimer. The CSTF complex is composed of CSTF1 (50 kDa subunit), CSTF2 (64 kDa subunit) and CSTF3 (77 kDa subunit). Interacts (via repeats WD) directly with CSTF3. Interacts (via repeat WD6) with BARD1. Interacts with ERCC6.

It is found in the nucleus. Its function is as follows. One of the multiple factors required for polyadenylation and 3'-end cleavage of mammalian pre-mRNAs. May be responsible for the interaction of CSTF with other factors to form a stable complex on the pre-mRNA. The protein is Cleavage stimulation factor subunit 1 (Cstf1) of Mus musculus (Mouse).